The sequence spans 196 residues: Somatotropin (196 aa).

A signal peptide spans 1 to 18 (MEKVVLLLSVLSLGVVCP). Glutamine 19 bears the Pyrrolidone carboxylic acid mark. Histidine 35 contributes to the Zn(2+) binding site. A disulfide bridge connects residues cysteine 69 and cysteine 169. Glutamate 178 contacts Zn(2+). An intrachain disulfide couples cysteine 186 to cysteine 194.

It belongs to the somatotropin/prolactin family.

The protein resides in the secreted. In terms of biological role, growth hormone plays an important role in growth control and is involved in the regulation of several anabolic processes. Implicated as an osmoregulatory substance important for seawater adaptation. The protein is Somatotropin (gh) of Siganus guttatus (Orange-spotted spinefoot).